Reading from the N-terminus, the 135-residue chain is Large ribosomal subunit protein uL22c (135 aa).

This sequence belongs to the universal ribosomal protein uL22 family. In terms of assembly, part of the 50S ribosomal subunit.

Its subcellular location is the plastid. In terms of biological role, this protein binds specifically to 23S rRNA. Its function is as follows. The globular domain of the protein is located near the polypeptide exit tunnel on the outside of the subunit, while an extended beta-hairpin is found that lines the wall of the exit tunnel in the center of the 70S ribosome. The polypeptide is Large ribosomal subunit protein uL22c (rpl22) (Cuscuta reflexa (Southern Asian dodder)).